We begin with the raw amino-acid sequence, 938 residues long: RIPOR family member 3 (938 aa).

Residues Ser-9, Ser-24, and Ser-340 each carry the phosphoserine modification. At Thr-345 the chain carries Phosphothreonine. Residues Ser-351 and Ser-384 each carry the phosphoserine modification. Disordered regions lie at residues 402 to 430 and 579 to 603; these read EMDS…FLPV and FGGS…SPSE.

Belongs to the RIPOR family.

This Mus musculus (Mouse) protein is RIPOR family member 3.